Consider the following 492-residue polypeptide: Aerolysin-3 (492 aa).

The signal sequence occupies residues 1–23 (MKKLKITGLSLIISGLLMAQAQA). 2 disulfides stabilise this stretch: Cys-42–Cys-98 and Cys-182–Cys-187. The interaction with host N-linked glycan stretch occupies residues 68–84 (WQISGLANGWVIMGPGY). Residues 256–288 (YGLSEKVTTKNKFKWPLVGETELSIEIAANQSW) are part of the transmembrane beta-barrel after proteolytic activation of the toxin and insertion into the host membrane. Residues 346-355 (RWGGNAWYTH) form an interaction with glycans from host GPI-anchor region. Positions 446 to 492 (AAASHSSRARNLSAGQGLRLEIPLDAQELSGLGFNNVSLSVTPAANQ) are excised as a propeptide.

The protein belongs to the aerolysin family. In terms of assembly, homodimer in solution; homoheptamer in the host membrane. After binding to GPI-anchored proteins in target membranes and proteolytic removal of the C-terminal propeptide, the protein assembles into a heptameric pre-pore complex. A further conformation change leads to insertion into the host membrane. Proteolytic cleavage and subsequent release of the propeptide trigger a major conformation change, leading to the formation of a heptameric pre-pore that then inserts into the host membrane.

The protein localises to the secreted. It localises to the host cell membrane. In terms of biological role, secreted, cytolytic toxin that forms pores in host membranes after proteolytic removal of a C-terminal propeptide, leading to destruction of the membrane permeability barrier and cell death. The pores are formed by transmembrane beta-strands and are approximately 3 nm in diameter. In Aeromonas hydrophila, this protein is Aerolysin-3 (ahh3).